The sequence spans 419 residues: Gamma-glutamyl phosphate reductase (419 aa).

Belongs to the gamma-glutamyl phosphate reductase family.

It is found in the cytoplasm. It carries out the reaction L-glutamate 5-semialdehyde + phosphate + NADP(+) = L-glutamyl 5-phosphate + NADPH + H(+). It participates in amino-acid biosynthesis; L-proline biosynthesis; L-glutamate 5-semialdehyde from L-glutamate: step 2/2. Its function is as follows. Catalyzes the NADPH-dependent reduction of L-glutamate 5-phosphate into L-glutamate 5-semialdehyde and phosphate. The product spontaneously undergoes cyclization to form 1-pyrroline-5-carboxylate. In Yersinia enterocolitica serotype O:8 / biotype 1B (strain NCTC 13174 / 8081), this protein is Gamma-glutamyl phosphate reductase.